The primary structure comprises 251 residues: Protein phosphatase 1 regulatory subunit 35 (251 aa).

2 disordered regions span residues 58–99 (LITV…QQTH) and 180–235 (PALA…VPRP). Positions 76-99 (PNKDEHGVETDREQSRECDGQQTH) are enriched in basic and acidic residues.

Belongs to the PPP1R35 family.

Its subcellular location is the cytoplasm. The protein resides in the cytoskeleton. It localises to the microtubule organizing center. The protein localises to the centrosome. It is found in the centriole. During centriole duplication, may play a role in the centriole elongation by promoting the recruitment of the microtubule-binding elongation machinery, leading to the centriole to centrosome conversion. In addition may play a role in the primary cilia assembly. The sequence is that of Protein phosphatase 1 regulatory subunit 35 from Danio rerio (Zebrafish).